Consider the following 315-residue polypeptide: Glycine--tRNA ligase alpha subunit (315 aa).

It belongs to the class-II aminoacyl-tRNA synthetase family. As to quaternary structure, tetramer of two alpha and two beta subunits.

The protein localises to the cytoplasm. It carries out the reaction tRNA(Gly) + glycine + ATP = glycyl-tRNA(Gly) + AMP + diphosphate. The polypeptide is Glycine--tRNA ligase alpha subunit (Pseudomonas putida (strain GB-1)).